A 509-amino-acid polypeptide reads, in one-letter code: Scavenger receptor class B member 1 (509 aa).

At 1 to 11 (MGNLSRARRVT) the chain is on the cytoplasmic side. Residues 12–32 (AALGFIGLLFAVLGIIMIVMV) traverse the membrane as a helical segment. Over 33–440 (PSIIKQQVLK…YIQLVLMPKV (408 aa)) the chain is Extracellular. Residues asparagine 102, asparagine 108, asparagine 173, asparagine 212, asparagine 227, asparagine 255, asparagine 310, asparagine 330, and asparagine 383 are each glycosylated (N-linked (GlcNAc...) asparagine). An intrachain disulfide couples cysteine 251 to cysteine 384. Residues 441 to 461 (LHYAQYVLLALGCVLLLIPII) traverse the membrane as a helical segment. The Cytoplasmic portion of the chain corresponds to 462-509 (YQIRSQEKCYLFWISFKKGSKDKEAVQAYSEFLMTSAPKGTVLQEARL).

It belongs to the CD36 family. N-glycosylated. Post-translationally, the six cysteines of the extracellular domain are all involved in intramolecular disulfide bonds.

Its subcellular location is the cell membrane. The protein resides in the membrane. The protein localises to the caveola. Receptor for different ligands such as phospholipids, cholesterol ester, lipoproteins, phosphatidylserine and apoptotic cells. Receptor for HDL, mediating selective uptake of cholesteryl ether and HDL-dependent cholesterol efflux. Also facilitates the flux of free and esterified cholesterol between the cell surface and apoB-containing lipoproteins and modified lipoproteins, although less efficiently than HDL. May be involved in the phagocytosis of apoptotic cells, via its phosphatidylserine binding activity. This is Scavenger receptor class B member 1 (SCARB1) from Bos taurus (Bovine).